We begin with the raw amino-acid sequence, 311 residues long: Aspartate carbamoyltransferase catalytic subunit (311 aa).

Carbamoyl phosphate contacts are provided by Arg-58 and Thr-59. An L-aspartate-binding site is contributed by Lys-86. Positions 108, 136, and 139 each coordinate carbamoyl phosphate. 2 residues coordinate L-aspartate: Arg-169 and Arg-223. Residues Gly-264 and Pro-265 each contribute to the carbamoyl phosphate site.

The protein belongs to the aspartate/ornithine carbamoyltransferase superfamily. ATCase family. Heterododecamer (2C3:3R2) of six catalytic PyrB chains organized as two trimers (C3), and six regulatory PyrI chains organized as three dimers (R2).

The enzyme catalyses carbamoyl phosphate + L-aspartate = N-carbamoyl-L-aspartate + phosphate + H(+). It participates in pyrimidine metabolism; UMP biosynthesis via de novo pathway; (S)-dihydroorotate from bicarbonate: step 2/3. Catalyzes the condensation of carbamoyl phosphate and aspartate to form carbamoyl aspartate and inorganic phosphate, the committed step in the de novo pyrimidine nucleotide biosynthesis pathway. The sequence is that of Aspartate carbamoyltransferase catalytic subunit from Pelodictyon phaeoclathratiforme (strain DSM 5477 / BU-1).